Consider the following 72-residue polypeptide: Translation initiation factor IF-1 (72 aa).

The S1-like domain occupies Met1–Lys72.

Belongs to the IF-1 family. In terms of assembly, component of the 30S ribosomal translation pre-initiation complex which assembles on the 30S ribosome in the order IF-2 and IF-3, IF-1 and N-formylmethionyl-tRNA(fMet); mRNA recruitment can occur at any time during PIC assembly.

Its subcellular location is the cytoplasm. Its function is as follows. One of the essential components for the initiation of protein synthesis. Stabilizes the binding of IF-2 and IF-3 on the 30S subunit to which N-formylmethionyl-tRNA(fMet) subsequently binds. Helps modulate mRNA selection, yielding the 30S pre-initiation complex (PIC). Upon addition of the 50S ribosomal subunit IF-1, IF-2 and IF-3 are released leaving the mature 70S translation initiation complex. The polypeptide is Translation initiation factor IF-1 (Caldanaerobacter subterraneus subsp. tengcongensis (strain DSM 15242 / JCM 11007 / NBRC 100824 / MB4) (Thermoanaerobacter tengcongensis)).